We begin with the raw amino-acid sequence, 439 residues long: Histidinol dehydrogenase (439 aa).

NAD(+) is bound by residues tyrosine 127, glutamine 185, and asparagine 208. Residues serine 234, glutamine 256, and histidine 259 each coordinate substrate. Glutamine 256 and histidine 259 together coordinate Zn(2+). Residues glutamate 323 and histidine 324 each act as proton acceptor in the active site. Histidine 324, aspartate 357, glutamate 411, and histidine 416 together coordinate substrate. Aspartate 357 is a Zn(2+) binding site. Histidine 416 contacts Zn(2+).

It belongs to the histidinol dehydrogenase family. Zn(2+) is required as a cofactor.

It carries out the reaction L-histidinol + 2 NAD(+) + H2O = L-histidine + 2 NADH + 3 H(+). It participates in amino-acid biosynthesis; L-histidine biosynthesis; L-histidine from 5-phospho-alpha-D-ribose 1-diphosphate: step 9/9. Catalyzes the sequential NAD-dependent oxidations of L-histidinol to L-histidinaldehyde and then to L-histidine. The protein is Histidinol dehydrogenase of Aliivibrio fischeri (strain ATCC 700601 / ES114) (Vibrio fischeri).